The chain runs to 367 residues: Quinolinate synthase (367 aa).

Iminosuccinate-binding residues include H45 and S62. Residue C109 coordinates [4Fe-4S] cluster. Iminosuccinate-binding positions include 140-142 (YVN) and S161. C229 contacts [4Fe-4S] cluster. Residues 255–257 (HPE) and T272 each bind iminosuccinate. C319 contacts [4Fe-4S] cluster.

This sequence belongs to the quinolinate synthase family. Type 3 subfamily. The cofactor is [4Fe-4S] cluster.

It localises to the cytoplasm. The catalysed reaction is iminosuccinate + dihydroxyacetone phosphate = quinolinate + phosphate + 2 H2O + H(+). The protein operates within cofactor biosynthesis; NAD(+) biosynthesis; quinolinate from iminoaspartate: step 1/1. Catalyzes the condensation of iminoaspartate with dihydroxyacetone phosphate to form quinolinate. This Geobacillus thermodenitrificans (strain NG80-2) protein is Quinolinate synthase.